A 313-amino-acid polypeptide reads, in one-letter code: 4-diphosphocytidyl-2-C-methyl-D-erythritol kinase (313 aa).

The active site involves Lys27. 110 to 120 (PIGGGVGGGSS) provides a ligand contact to ATP. The active site involves Asp152.

It belongs to the GHMP kinase family. IspE subfamily.

It catalyses the reaction 4-CDP-2-C-methyl-D-erythritol + ATP = 4-CDP-2-C-methyl-D-erythritol 2-phosphate + ADP + H(+). It functions in the pathway isoprenoid biosynthesis; isopentenyl diphosphate biosynthesis via DXP pathway; isopentenyl diphosphate from 1-deoxy-D-xylulose 5-phosphate: step 3/6. Functionally, catalyzes the phosphorylation of the position 2 hydroxy group of 4-diphosphocytidyl-2C-methyl-D-erythritol. The chain is 4-diphosphocytidyl-2-C-methyl-D-erythritol kinase from Histophilus somni (strain 2336) (Haemophilus somnus).